The primary structure comprises 921 residues: Isoleucine--tRNA ligase (921 aa).

The short motif at 57-67 is the 'HIGH' region element; that stretch reads PYANGDIHMGH. Glu-552 serves as a coordination point for L-isoleucyl-5'-AMP. A 'KMSKS' region motif is present at residues 593-597; it reads KMSKS. An ATP-binding site is contributed by Lys-596. Positions 888, 891, 908, and 911 each coordinate Zn(2+).

Belongs to the class-I aminoacyl-tRNA synthetase family. IleS type 1 subfamily. As to quaternary structure, monomer. Zn(2+) serves as cofactor.

The protein localises to the cytoplasm. The enzyme catalyses tRNA(Ile) + L-isoleucine + ATP = L-isoleucyl-tRNA(Ile) + AMP + diphosphate. Functionally, catalyzes the attachment of isoleucine to tRNA(Ile). As IleRS can inadvertently accommodate and process structurally similar amino acids such as valine, to avoid such errors it has two additional distinct tRNA(Ile)-dependent editing activities. One activity is designated as 'pretransfer' editing and involves the hydrolysis of activated Val-AMP. The other activity is designated 'posttransfer' editing and involves deacylation of mischarged Val-tRNA(Ile). In Bacillus anthracis (strain A0248), this protein is Isoleucine--tRNA ligase.